The following is a 131-amino-acid chain: Small ribosomal subunit protein bS6 (131 aa).

Positions 97 to 131 are disordered; the sequence is TEASPMAKARDERDSRRGPAGERSYDEAHAEEIAE. A compositionally biased stretch (basic and acidic residues) spans 104-131; sequence KARDERDSRRGPAGERSYDEAHAEEIAE.

This sequence belongs to the bacterial ribosomal protein bS6 family.

Binds together with bS18 to 16S ribosomal RNA. In Shewanella baltica (strain OS223), this protein is Small ribosomal subunit protein bS6.